The primary structure comprises 341 residues: L-threonine 3-dehydrogenase (341 aa).

Residue cysteine 38 participates in Zn(2+) binding. Catalysis depends on charge relay system residues threonine 40 and histidine 43. 6 residues coordinate Zn(2+): histidine 63, glutamate 64, cysteine 93, cysteine 96, cysteine 99, and cysteine 107. Residues isoleucine 175, aspartate 195, arginine 200, leucine 262 to isoleucine 264, and isoleucine 286 to tyrosine 287 contribute to the NAD(+) site.

It belongs to the zinc-containing alcohol dehydrogenase family. Homotetramer. The cofactor is Zn(2+).

It localises to the cytoplasm. The enzyme catalyses L-threonine + NAD(+) = (2S)-2-amino-3-oxobutanoate + NADH + H(+). It functions in the pathway amino-acid degradation; L-threonine degradation via oxydo-reductase pathway; glycine from L-threonine: step 1/2. Catalyzes the NAD(+)-dependent oxidation of L-threonine to 2-amino-3-ketobutyrate. The polypeptide is L-threonine 3-dehydrogenase (Shewanella halifaxensis (strain HAW-EB4)).